Here is a 752-residue protein sequence, read N- to C-terminus: MSRRVFASAVLLLIVVTMCCGGAATAQVGSNADASTPGSALTGAIAGEGSSSGGVEGLQRVDLFVPQKTQVLPKKGPDSSRRDSFFSPSLVSAGGVIAAFAEGHINTKNPHNESAKPFSDVVAGYIDSAWEWPTLVEKVSESTWQAHTVLGKAEGKKSLDVVLRPTTTTKGNKVFLLAGSTDLSYVNWSWREGSLELKLVVGDVTKPTSSEPTERIKWGEIKSLLNESTIAAQKGKLTEFLASGGSGVVMEDGTIVFSLMAVNEKKDGVFSLIIYSKDNGSTWSLSEGISPAKCGAPRITEWEGSLLMIVDCENDQRVYVSRDMGTTWTEAIGTLSGVGSTHNWETIGRRLAVEALITVTIEGRKVMLYTQRGYALGETETTSPLYLWVTDNNRSFFVGPVGMDNAVKGELAGALLYSDGGLHLLQRRDSGEDSVMSLSRLTEELKEIKSVLSTWSQKDVFFSSLSIPTVGLVAVLSDAAGDGRWYDEYLCLNATVTNATKVKDGFQLTEPDSRAVWSVNIPDGNVRHISLSHNFTLVASVIIEEAPSGNTPLLTAVLVDAGPEYFMRLSYTADNKWMTMLKDEKKPTTESRPWEAGKEHQVALMLQGNKASVYVDGELLGEEEVPLTGEKPLEIFAFCFGACKIDGDEEESSPKEIGKKPRVTVTNVFLYNRPLNSTEMRAIKDRIPVPTRAPEPQVKIAPKPAAPAAPAGNEETARETGDGGANGDAVSAYGRVLLPLLFLLGLWGLATA.

The N-terminal stretch at methionine 1 to alanine 23 is a signal peptide. BNR repeat units follow at residues isoleucine 274–leucine 285 and tyrosine 319–glutamate 330. The tract at residues alanine 693–alanine 725 is disordered. Positions alanine 701–alanine 711 are enriched in low complexity.

Belongs to the glycosyl hydrolase 33 family.

It carries out the reaction Hydrolysis of alpha-(2-&gt;3)-, alpha-(2-&gt;6)-, alpha-(2-&gt;8)- glycosidic linkages of terminal sialic acid residues in oligosaccharides, glycoproteins, glycolipids, colominic acid and synthetic substrates.. Functionally, developmentally regulated neuraminidase implicated in parasite invasion of cells. May contribute to the pathology during T.cruzi infection by cleaving sialic acid from cells of the immune system. The chain is Sialidase 85-1.1 (SA85-1.1) from Trypanosoma cruzi.